The chain runs to 241 residues: Microneme antigen (241 aa).

A signal peptide spans 1–34; sequence MRLPIRFPKYVLYGMASAVWSILFLHILVGDTMS. The propeptide occupies 35–103; sequence AADALSWSGG…ATGRGPSFVH (69 aa). Residues 61-83 show a composition bias toward basic and acidic residues; that stretch reads HEMGKELEQQHGAEEQQMQRDTK. The interval 61-92 is disordered; sequence HEMGKELEQQHGAEEQQMQRDTKPAAFSNPPH. 2 consecutive PAN domains span residues 112–181 and 185–241; these read CFPH…PRSC and CTDN…FNKS. Intrachain disulfides connect Cys112–Cys181, Cys137–Cys159, Cys141–Cys147, Cys185–Cys189, Cys210–Cys230, and Cys214–Cys220. Ser121 is an a carbohydrate binding site. Lys162, Tyr169, and Asp174 together coordinate a carbohydrate.

Belongs to the microneme antigen family. As to quaternary structure, homodimer or heterodimer of major microneme antigen and microneme antigen. Post-translationally, contains six disulfide bonds.

It localises to the cytoplasmic vesicle. The protein localises to the secretory vesicle. The protein resides in the microneme. In terms of biological role, galactose-binding lectin. Plays a role in adhesion to the host cell. Has a potential role in invasion of host cells. The chain is Microneme antigen from Sarcocystis muris.